Reading from the N-terminus, the 133-residue chain is Small ribosomal subunit protein eS8 (133 aa).

The interval 1 to 31 is disordered; the sequence is MGFYQGPDNRKITGGLKGKHRDKRKYEIGNP.

The protein belongs to the eukaryotic ribosomal protein eS8 family. Part of the 30S ribosomal subunit.

In Saccharolobus solfataricus (strain ATCC 35092 / DSM 1617 / JCM 11322 / P2) (Sulfolobus solfataricus), this protein is Small ribosomal subunit protein eS8.